Consider the following 258-residue polypeptide: Protein SAWADEE HOMEODOMAIN HOMOLOG 1 (258 aa).

The segment at 138 to 244 (AWYDVSSFLT…LVRYELDNTE (107 aa)) is SAWADEE domain. Positions 191, 225, 230, and 232 each coordinate Zn(2+).

Associates with the RNA polymerase IV (Pol IV) complex. Interacts with NRPD1, NRPD2, NRPD3, NRPD3B, CLSY1 and CLSY2.

It localises to the nucleus. In terms of biological role, involved in RNA-directed DNA methylation (RdDM). Required for the silencing of some endogenous RdDM targets and accumulation of 24-nt siRNAs, but not for the production of Pol V-dependent transcripts. Functions in transcriptional silencing through both DNA methylation-dependent and -independent pathways. Required for both maintenance and de-novo DNA methylation. Plays a role in the recruitment of Pol IV to genomic regions associated with K9 methylated histone H3 that are targets for RdDM. The sequence is that of Protein SAWADEE HOMEODOMAIN HOMOLOG 1 (SHH1) from Arabidopsis thaliana (Mouse-ear cress).